The sequence spans 659 residues: Cysteine-rich receptor-like protein kinase 7 (659 aa).

The signal sequence occupies residues 1 to 23 (MSSLFPFIFLFLFSFLTSFRASA). Topologically, residues 24–273 (QDPRFLAYYC…SLSDKSGNSN (250 aa)) are extracellular. 2 Gnk2-homologous domains span residues 27–131 (RFLA…HKNI) and 142–244 (FILR…LYDF). Residues N35, N42, N60, N69, and N103 are each glycosylated (N-linked (GlcNAc...) asparagine). N-linked (GlcNAc...) asparagine glycosylation is present at N246. A helical transmembrane segment spans residues 274–294 (VVVVAVVVPIIVAVLIFIAGY). Residues 295–659 (CFFAKRAKKT…DKSMSDLDPR (365 aa)) are Cytoplasmic-facing. A Protein kinase domain is found at 336-622 (FSENNKIGRG…ALPAPQQPGF (287 aa)). ATP-binding positions include 342–350 (IGRGGFGDV) and K364. Phosphotyrosine is present on Y409. D461 serves as the catalytic Proton acceptor. A Phosphoserine modification is found at S465. At T501 the chain carries Phosphothreonine. Phosphotyrosine is present on Y509. The disordered stretch occupies residues 626 to 659 (SRPGTNRLDSDQSTTNKSVTVSIDDKSMSDLDPR). Over residues 636-646 (DQSTTNKSVTV) the composition is skewed to polar residues. The span at 648-659 (IDDKSMSDLDPR) shows a compositional bias: basic and acidic residues.

Belongs to the protein kinase superfamily. Ser/Thr protein kinase family. CRK subfamily.

Its subcellular location is the membrane. The enzyme catalyses L-seryl-[protein] + ATP = O-phospho-L-seryl-[protein] + ADP + H(+). It catalyses the reaction L-threonyl-[protein] + ATP = O-phospho-L-threonyl-[protein] + ADP + H(+). The protein is Cysteine-rich receptor-like protein kinase 7 (CRK7) of Arabidopsis thaliana (Mouse-ear cress).